A 317-amino-acid polypeptide reads, in one-letter code: Porphobilinogen deaminase (317 aa).

C240 is subject to S-(dipyrrolylmethanemethyl)cysteine.

This sequence belongs to the HMBS family. In terms of assembly, monomer. Dipyrromethane serves as cofactor.

The catalysed reaction is 4 porphobilinogen + H2O = hydroxymethylbilane + 4 NH4(+). It participates in porphyrin-containing compound metabolism; protoporphyrin-IX biosynthesis; coproporphyrinogen-III from 5-aminolevulinate: step 2/4. In terms of biological role, tetrapolymerization of the monopyrrole PBG into the hydroxymethylbilane pre-uroporphyrinogen in several discrete steps. This chain is Porphobilinogen deaminase, found in Nitratidesulfovibrio vulgaris (strain DSM 19637 / Miyazaki F) (Desulfovibrio vulgaris).